We begin with the raw amino-acid sequence, 263 residues long: NAD(P)H-quinone oxidoreductase subunit K, chloroplastic (263 aa).

Positions 64, 65, 129, and 160 each coordinate [4Fe-4S] cluster.

It belongs to the complex I 20 kDa subunit family. As to quaternary structure, NDH is composed of at least 16 different subunits, 5 of which are encoded in the nucleus. The cofactor is [4Fe-4S] cluster.

Its subcellular location is the plastid. It localises to the chloroplast thylakoid membrane. The catalysed reaction is a plastoquinone + NADH + (n+1) H(+)(in) = a plastoquinol + NAD(+) + n H(+)(out). The enzyme catalyses a plastoquinone + NADPH + (n+1) H(+)(in) = a plastoquinol + NADP(+) + n H(+)(out). In terms of biological role, NDH shuttles electrons from NAD(P)H:plastoquinone, via FMN and iron-sulfur (Fe-S) centers, to quinones in the photosynthetic chain and possibly in a chloroplast respiratory chain. The immediate electron acceptor for the enzyme in this species is believed to be plastoquinone. Couples the redox reaction to proton translocation, and thus conserves the redox energy in a proton gradient. This Huperzia lucidula (Shining clubmoss) protein is NAD(P)H-quinone oxidoreductase subunit K, chloroplastic (ndhK).